The primary structure comprises 307 residues: Dioxygenase cdmD (307 aa).

Positions 146, 148, and 226 each coordinate Fe cation.

Belongs to the PhyH family. Homodimer. Fe cation is required as a cofactor.

It catalyses the reaction verruculide A + 2-oxoglutarate + O2 = chrodrimanin T + succinate + CO2. It carries out the reaction chrodrimanin E + 2-oxoglutarate + O2 = chrodrimanin A + succinate + CO2. It participates in secondary metabolite biosynthesis; terpenoid biosynthesis. Functionally, dioxygenase; part of the gene cluster that mediates the biosynthesis of chrodrimanin B, a meroterpenoid that acts as a potent blocker of insect GABA-gated chloride channels. The first step of the pathway is the biosynthesis of 6-hydroxymellein by the polyketide synthase cdmE. The prenyltransferase cdmH acts as a 6-hydroxymellein 5-farnesyltransferase and produces the hydrophobic metabolite verruculide C. The FAD-dependent monooxygenase cdmI further converts verruculide C into verruculide B. The terpene cyclase cdmG then produced the pentacyclic molecule 3-hydroxypentacecilide A, the backbone structure of chrodrimanin B, via folding the farnesyl moiety of the substrate into the chair-boat conformation. The short-chain dehydrogenase/reductase cdmF functions as the 3-OH dehydrogenase that oxidizes the C-3 hydroxyl group of 3-hydroxypentacecilide A and produces chrodrimanin C, the dehydrogenated product of 3-hydroxypentacecilide A. The cytochrome P450 monooxygenase cdmJ then accepts both 3-hydroxypentacecilide A and chrodrimanin C and functions as a C-7-beta-hydroxylase to produce respectively chrodrimanin H and chrodrimanin F. The dioxygenase cdmA accepts chrodrimanin H to afford chrodrimanin E, which is further transformed to chrodrimanin A by the dioxygenase cdmD. CdmA can also accept chrodrimanin C as substrate to convert it into verruculide A, which is further converted into chrodrimanin T by cdmD. The last step of the biosynthesis is proposed to be performed by the acetyltransferase cdmC which acetylates chrodrimanin A to yield chrodrimanin B. The pathway may also lead to the production of additional shunt products, including chrodrimanins T and U. This chain is Dioxygenase cdmD, found in Talaromyces verruculosus (Penicillium verruculosum).